Consider the following 103-residue polypeptide: Large ribosomal subunit protein bL21 (103 aa).

It belongs to the bacterial ribosomal protein bL21 family. As to quaternary structure, part of the 50S ribosomal subunit. Contacts protein L20.

This protein binds to 23S rRNA in the presence of protein L20. In Bordetella parapertussis (strain 12822 / ATCC BAA-587 / NCTC 13253), this protein is Large ribosomal subunit protein bL21.